Reading from the N-terminus, the 187-residue chain is uncharacterized protein (187 aa).

Positions 1-95 (MTTMKRSADP…GSTRPSARYG (95 aa)) are disordered. The segment covering 46–80 (RARRSRGPKRFLGKRNYRRARARKPGKRDRAHSSK) has biased composition (basic residues).

It is found in the mitochondrion. This is an uncharacterized protein from Arabidopsis thaliana (Mouse-ear cress).